The following is a 417-amino-acid chain: MITLTYRIETPGSVETMADKIASDQSTGTFVPVPGETEELKSRVAARVLAIRPLENARHPTWPESAPDTLLHRADVDIAFPLEAIGTDLSALMTIAIGGVYSIKGMTGIRIVDMKLPEAFRSAHPGPQFGIAGSRRLTGVEGRPIIGTIVKPALGLRPHETAELVGELIGSGVDFIKDDEKLMSPAYSPLKERVAAIMPRILDHEQKTGKKVMYAFGISHADPDEMMRNHDIVAAAGGNCAVVNINSIGFGGMSFLRKRSSLVLHAHRNGWDVLTRDPGAGMDFKVYQQFWRLLGVDQFQINGIRIKYWEPDESFVSSFKAVSTPLFDAADCPLPVAGSGQWGGQAPETYERTGRTIDLLYLCGGGIVSHPGGPAAGVRAVQQAWQAAVAGIPLEVYAKDHPELAASIAKFSDGKGA.

Mg(2+)-binding residues include Lys-177, Asp-179, and Glu-180. Lys-177 is modified (N6-carboxylysine).

It belongs to the RuBisCO large chain family. The cofactor is Mg(2+).

The catalysed reaction is 3-oxoisoapionate 4-phosphate + H(+) = L-erythrulose 1-phosphate + CO2. The protein operates within carbohydrate metabolism. Functionally, involved in catabolism of D-apiose. Catalyzes the decarboxylation of 3-oxo-isoapionate 4-phosphate to L-erythrulose 1-phosphate. The chain is 3-oxo-isoapionate-4-phosphate decarboxylase from Rhizobium etli (strain ATCC 51251 / DSM 11541 / JCM 21823 / NBRC 15573 / CFN 42).